The primary structure comprises 490 residues: Subtilisin-like protease 8 (490 aa).

The signal sequence occupies residues 1 to 26; sequence MKGLLSLSVLPVLAYASPMIVDSIHQ. The propeptide occupies 27 to 134; it reads NAAPILSSTN…YIERDSEVHT (108 aa). One can recognise an Inhibitor I9 domain in the interval 43-134; sequence SYIVVFKKGV…YIERDSEVHT (92 aa). One can recognise a Peptidase S8 domain in the interval 144 to 450; the sequence is PWGLARISHR…GGSDDYKKII (307 aa). Active-site charge relay system residues include D180 and H212. Residue N282 is glycosylated (N-linked (GlcNAc...) asparagine). Residue S378 is the Charge relay system of the active site. An N-linked (GlcNAc...) asparagine glycan is attached at N456.

It belongs to the peptidase S8 family.

The protein resides in the secreted. Secreted subtilisin-like serine protease with keratinolytic activity that contributes to pathogenicity. The chain is Subtilisin-like protease 8 (SUB8) from Trichophyton verrucosum (strain HKI 0517).